A 262-amino-acid polypeptide reads, in one-letter code: MTETAIPDVQSSPDKRHIAINRVGIRDLRLPLFIENAAGEAMPTVARAALMVALPHTQKGTHMSRFIRLLDLKTPISVSALPTLHQKMLDTLHAEEGTISLSFPFFIEKSAPVSGEKALLDYEVVLAVDGNRKHVEVSVEVTVPVTSLCPCSKEISQYGAHNQRSHIVIYAQYNPNQPFSIEDLIHIAEEGASCPIWSLLKRPDEKYITERAYEHPKFVEDIVRDIAMVLNDDPRISFYRISSENFESIHNHSAFALIEHQK.

The protein belongs to the GTP cyclohydrolase IV family.

It catalyses the reaction GTP + H2O = 7,8-dihydroneopterin 3'-triphosphate + formate + H(+). Its pathway is cofactor biosynthesis; 7,8-dihydroneopterin triphosphate biosynthesis; 7,8-dihydroneopterin triphosphate from GTP: step 1/1. Converts GTP to 7,8-dihydroneopterin triphosphate. The polypeptide is GTP cyclohydrolase FolE2 (Dichelobacter nodosus (strain VCS1703A)).